Here is a 469-residue protein sequence, read N- to C-terminus: MRFPNVGLAELSKSIIKIRGPDATKFLNGLVTSRLLPNVVKKKQHTISESENRHSNLSEIIDVSKNYGLMHEDIYDPDYNINISRDGINSMILNSKGRVVTDCFLYPDPFHNVDWVFQESMNEPGYLLEVDTSISQQLMMILKLHKLSAKVDIVPDKKLYSYYYYDDTATFDAWLENIQFKYFKSLDPTTALQNANSFIKDNVFFNQQIAKNILGFAVDNRIPNFGIKFISNKPISTNNDNDGQQDVIPVESLFSESFSQEFDTPTINESGVVQRRFQNGLFEIQDASKGSSLLPFECNLDYTNGLSLDKGCYVGQELTIRTFNNGVIRKRIFPVQFFQLTEYNISYLQDHPIDLNMSDPVVENLSNIPNSSLGKLEITPLDDSEPQQQQPPTNESPFASSPFGSSKVVRKRKTSLGKIVSVKDNLGLVMLAVSDVEKCQIYKLELPSFEGGTQFIGVKVGIPDWWPVN.

Residues 376 to 406 (LEITPLDDSEPQQQQPPTNESPFASSPFGSS) are disordered. Over residues 386–404 (PQQQQPPTNESPFASSPFG) the composition is skewed to polar residues.

Belongs to the GcvT family. CAF17/IBA57 subfamily.

It localises to the mitochondrion matrix. This is Iron-sulfur cluster assembly factor IBA57 homolog, mitochondrial (CAF17) from Candida albicans (strain SC5314 / ATCC MYA-2876) (Yeast).